Consider the following 279-residue polypeptide: Urease accessory protein UreD (279 aa).

The protein belongs to the UreD family. In terms of assembly, ureD, UreF and UreG form a complex that acts as a GTP-hydrolysis-dependent molecular chaperone, activating the urease apoprotein by helping to assemble the nickel containing metallocenter of UreC. The UreE protein probably delivers the nickel.

The protein resides in the cytoplasm. Required for maturation of urease via the functional incorporation of the urease nickel metallocenter. The chain is Urease accessory protein UreD from Nostoc sp. (strain PCC 7120 / SAG 25.82 / UTEX 2576).